The sequence spans 293 residues: Phosphatidylserine decarboxylase proenzyme (293 aa).

Active-site charge relay system; for autoendoproteolytic cleavage activity residues include Asp-90, His-147, and Ser-254. Catalysis depends on Ser-254, which acts as the Schiff-base intermediate with substrate; via pyruvic acid; for decarboxylase activity. Ser-254 is subject to Pyruvic acid (Ser); by autocatalysis.

The protein belongs to the phosphatidylserine decarboxylase family. PSD-B subfamily. Prokaryotic type I sub-subfamily. In terms of assembly, heterodimer of a large membrane-associated beta subunit and a small pyruvoyl-containing alpha subunit. Pyruvate serves as cofactor. Is synthesized initially as an inactive proenzyme. Formation of the active enzyme involves a self-maturation process in which the active site pyruvoyl group is generated from an internal serine residue via an autocatalytic post-translational modification. Two non-identical subunits are generated from the proenzyme in this reaction, and the pyruvate is formed at the N-terminus of the alpha chain, which is derived from the carboxyl end of the proenzyme. The autoendoproteolytic cleavage occurs by a canonical serine protease mechanism, in which the side chain hydroxyl group of the serine supplies its oxygen atom to form the C-terminus of the beta chain, while the remainder of the serine residue undergoes an oxidative deamination to produce ammonia and the pyruvoyl prosthetic group on the alpha chain. During this reaction, the Ser that is part of the protease active site of the proenzyme becomes the pyruvoyl prosthetic group, which constitutes an essential element of the active site of the mature decarboxylase.

It is found in the cell membrane. The catalysed reaction is a 1,2-diacyl-sn-glycero-3-phospho-L-serine + H(+) = a 1,2-diacyl-sn-glycero-3-phosphoethanolamine + CO2. The protein operates within phospholipid metabolism; phosphatidylethanolamine biosynthesis; phosphatidylethanolamine from CDP-diacylglycerol: step 2/2. Catalyzes the formation of phosphatidylethanolamine (PtdEtn) from phosphatidylserine (PtdSer). In Yersinia pseudotuberculosis serotype O:1b (strain IP 31758), this protein is Phosphatidylserine decarboxylase proenzyme.